The primary structure comprises 359 residues: 4'-phosphopantetheinyl transferase A (359 aa).

The protein belongs to the P-Pant transferase superfamily.

It carries out the reaction apo-[ACP] + CoA = holo-[ACP] + adenosine 3',5'-bisphosphate + H(+). Its activity is regulated as follows. Activity is inhibited bythe antifunfal copmpounds PD 404,182, 6-nitroso-1,2-benzopyrone, and calmidazolium chloride with IC(50) values of 3.9 uM, 35.2 uM, and 19.2 uM, respectively. Acyl-carrier-protein synthase that transfers the 4'-phosphopantetheine moiety from coenzyme A to a Ser of an acyl-carrier-protein. The 4'-phosphopantetheine (4'-PPT) portion of CoA provides the essential prosthetic group for a number of carrier proteins and multi-domain enzymes, priming them for the acceptance of acyl building blocks in fatty acid synthesis and many aspects of secondary metabolism mediated by polyketide synthases (PKSs) and non-ribosomal peptide synthetases (NRPSs). PptA is able to transfer the cofactor to a broad range of enzymes with acyl- or peptidyl-carrier protein domains and activates target enzymes involved in the synthesis of lysine, but also secondary metabolites including gliotoxin, fumigaclavine C, fumiquinazole A, fumiquinazoline C, pyripyroprene A, fumagillin, the siderophores triacetylfusarinine C (TAFC) and ferricrocin (FC), and dihydroxy naphthalene (DHN)-melanin. Plays an essential role in virulence. The sequence is that of 4'-phosphopantetheinyl transferase A from Aspergillus fumigatus (strain ATCC MYA-4609 / CBS 101355 / FGSC A1100 / Af293) (Neosartorya fumigata).